A 127-amino-acid chain; its full sequence is Adult-specific rigid cuticular protein 12.6 (127 aa).

Residues 9 to 87 (GPAYNFGYNT…ALAALAPKAP (79 aa)) enclose the Chitin-binding type R&amp;R domain.

In terms of biological role, component of the rigid cuticle of the spider. The chain is Adult-specific rigid cuticular protein 12.6 from Araneus diadematus (European garden spider).